An 82-amino-acid chain; its full sequence is DNA-directed RNA polymerase subunit omega (82 aa).

Belongs to the RNA polymerase subunit omega family. As to quaternary structure, the RNAP catalytic core consists of 2 alpha, 1 beta, 1 beta' and 1 omega subunit. When a sigma factor is associated with the core the holoenzyme is formed, which can initiate transcription.

The catalysed reaction is RNA(n) + a ribonucleoside 5'-triphosphate = RNA(n+1) + diphosphate. Functionally, promotes RNA polymerase assembly. Latches the N- and C-terminal regions of the beta' subunit thereby facilitating its interaction with the beta and alpha subunits. The protein is DNA-directed RNA polymerase subunit omega of Lachnoclostridium phytofermentans (strain ATCC 700394 / DSM 18823 / ISDg) (Clostridium phytofermentans).